A 668-amino-acid polypeptide reads, in one-letter code: Ankyrin repeat domain-containing protein OPG023 (668 aa).

9 ANK repeats span residues 31-64 (FKNN…PLHK), 101-131 (NDFN…DFSV), 135-166 (KHHS…SVIY), 199-231 (YIIS…NPSS), 235-266 (NYCT…NTAY), 277-311 (RGIM…PHGI), 334-368 (NSDV…VVNK), 458-487 (RGET…DVNI), and 491-521 (NGYT…TLDC). Residues 586 to 666 (GNTMFSLIFT…PYTIKYKIFE (81 aa)) are PRANC/F-box-like.

The protein belongs to the orthopoxvirus OPG023 family. Interacts (via N-terminus) with host RELA. Interacts (via PRANC/F-box-like domain) with the SKP1 component of the host SCF ubiquitin ligase complex.

In terms of biological role, substrate-specific adapter of SKP1-containing E3 ubiquitin-protein ligases which mediate the ubiquitination and subsequent proteasomal degradation of host target proteins. Prevents activation and subsequent nuclear localization of NF-kappa-B in infected cells, by targeting NF-kappa-B RELA subunit to the SCF E3 ligase complex. In Bos taurus (Bovine), this protein is Ankyrin repeat domain-containing protein OPG023 (OPG023).